The sequence spans 56 residues: Ovomucoid (56 aa).

Residues 6–56 (VDCSEYPKPACTMEQRPLCGSDNKTYGNKCNFCNAVVESNGTLTLSHFGKC) form the Kazal-like domain. 3 cysteine pairs are disulfide-bonded: C8–C38, C16–C35, and C24–C56. N45 carries an N-linked (GlcNAc...) asparagine glycan.

The protein resides in the secreted. The polypeptide is Ovomucoid (Afropavo congensis (Congo peafowl)).